The sequence spans 637 residues: CD2-associated protein (637 aa).

Residues 1–59 enclose the SH3 1; truncated domain; the sequence is MVDYIVEYDYDAVHDDELTIRVGEIIRNVKKLQEEGWLEGELNGRRGMFPDNFVKEIKR. The interaction with ANLN and localization to the midbody stretch occupies residues 1-175; the sequence is MVDYIVEYDY…ESTEDGETHN (175 aa). A Glycyl lysine isopeptide (Lys-Gly) (interchain with G-Cter in SUMO2) cross-link involves residue lysine 58. Phosphoserine is present on residues serine 80 and serine 86. In terms of domain architecture, SH3 2 spans 108 to 167; the sequence is TKKRQCKVLFDYSPQNEDELELIVGDVIDVIEEVEEGWWSGTLNNKLGLFPSNFVKELES. Positions 166–177 are enriched in basic and acidic residues; the sequence is ESTEDGETHNAQ. A disordered region spans residues 166–209; that stretch reads ESTEDGETHNAQEESEVPLTGPTSPLPSPGNGSEPAPGSVAQPK. Residue serine 224 is modified to Phosphoserine. The segment at 226–254 is disordered; it reads KLRTRTSSSETEEKKTEKPLILQPLGSRT. One can recognise an SH3 3 domain in the interval 269–330; that stretch reads KAKEYCRTLF…PDNFAVQISE (62 aa). Residues 333-455 are disordered; that stretch reads KDFPKPKKPP…KLDPEQLPVR (123 aa). Short sequence motifs (SH3-binding) lie at residues 336-352, 378-397, and 410-422; these read PKPKKPPPPAKGPAPKP, KPSKPAAPQVPPKKPTAPTK, and PKRPEKPVPPPPP. The span at 341–351 shows a compositional bias: pro residues; it reads PPPPAKGPAPK. A compositionally biased stretch (basic and acidic residues) spans 356 to 379; sequence AAEKKAFPLKAEEKDEKSLLEQKP. Over residues 437–449 the composition is skewed to basic and acidic residues; it reads IDTEPVSKPKLDP. 4 positions are modified to phosphoserine: serine 458, serine 469, serine 510, and serine 514. The disordered stretch occupies residues 488 to 555; it reads HLTANRPKMP…SLSTPSSASK (68 aa). The segment covering 517 to 539 has biased composition (basic and acidic residues); sequence KTLKLPKEDDSGNLKPLEFKKDA. Lysine 523 participates in a covalent cross-link: Glycyl lysine isopeptide (Lys-Gly) (interchain with G-Cter in SUMO2). The segment covering 540-555 has biased composition (low complexity); it reads SYSSKSSLSTPSSASK. Position 563 is a phosphothreonine (threonine 563). Residues 578 to 636 are a coiled coil; it reads RNSVDELRAQIIELLCIVDALKKDHGKELEKLRKELEEEKAMRSNLEVEIAKLKKAVLL. Position 580 is a phosphoserine (serine 580).

Homodimer. Interacts with F-actin, PKD2, NPHS1 and NPHS2. Interacts with WTIP. Interacts with DDN; interaction is direct. Interacts (via SH3 2 domain) with CBL (via phosphorylated C-terminus). Interacts with BCAR1/p130Cas (via SH3 domain). Interacts with MVB12A and ARHGAP17. Interacts with ANLN, CD2 and CBLB. Interacts with PDCD6IP and TSG101. Interacts with RIN3. Interacts directly with RET (inactive) and CBLC; upon RET activation by GDNF suggested to dissociate from RET as CBLC:CD2AP complex. Interacts with CGNL1 and SH3BP1; probably part of a complex at cell junctions. Interacts with CAPZA1. Phosphorylated on tyrosine residues; probably by c-Abl, Fyn and c-Src. As to expression, expressed in podocytes (at protein level).

It is found in the cytoplasm. It localises to the cytoskeleton. The protein localises to the cell projection. The protein resides in the ruffle. Its subcellular location is the cell junction. Functionally, seems to act as an adapter protein between membrane proteins and the actin cytoskeleton. In collaboration with CBLC, modulates the rate of RET turnover and may act as regulatory checkpoint that limits the potency of GDNF on neuronal survival. Controls CBLC function, converting it from an inhibitor to a promoter of RET degradation. May play a role in receptor clustering and cytoskeletal polarity in the junction between T-cell and antigen-presenting cell. May anchor the podocyte slit diaphragm to the actin cytoskeleton in renal glomerolus. Also required for cytokinesis. Plays a role in epithelial cell junctions formation. This is CD2-associated protein (Cd2ap) from Mus musculus (Mouse).